A 275-amino-acid polypeptide reads, in one-letter code: Lacto-N-neotetraose biosynthesis glycosyltransferase LgtB (275 aa).

Belongs to the glycosyltransferase 25 family.

It participates in glycan metabolism; lacto-N-neotetraose biosynthesis. Its pathway is bacterial outer membrane biogenesis; lipooligosaccharide biosynthesis. Adds the second galactose to the lacto-N-tetraose chain in lipooligosaccharide (LOS). This is Lacto-N-neotetraose biosynthesis glycosyltransferase LgtB (lgtB) from Neisseria meningitidis serogroup B (strain ATCC BAA-335 / MC58).